The primary structure comprises 707 residues: Anaerobic ribonucleoside-triphosphate reductase (707 aa).

In terms of domain architecture, ATP-cone spans 4–95 (FGVIKRDGSR…EYRHDRDLAR (92 aa)). A Glycine radical domain is found at 584 to 707 (KKVNPYDKLD…EEVKRRVKHL (124 aa)). Zn(2+)-binding residues include cysteine 645, cysteine 648, cysteine 663, and cysteine 666. Glycine 682 is modified (glycine radical).

It belongs to the anaerobic ribonucleoside-triphosphate reductase family. Forms a tetramer composed of two NrdD and two NrdG subunits.

It carries out the reaction a ribonucleoside 5'-triphosphate + formate + H(+) = a 2'-deoxyribonucleoside 5'-triphosphate + CO2 + H2O. Its activity is regulated as follows. Activated under anaerobic conditions by NrdG, a tightly associated activase. Activation involves the formation of a glycyl radical at Gly-682. In terms of biological role, catalyzes the conversion of ribonucleotides into deoxyribonucleotides, which are required for DNA synthesis and repair. In Haemophilus influenzae (strain ATCC 51907 / DSM 11121 / KW20 / Rd), this protein is Anaerobic ribonucleoside-triphosphate reductase (nrdD).